The chain runs to 185 residues: Small ribosomal subunit protein uS7 (185 aa).

It belongs to the universal ribosomal protein uS7 family. Part of the 30S ribosomal subunit.

One of the primary rRNA binding proteins, it binds directly to 16S rRNA where it nucleates assembly of the head domain of the 30S subunit. Is located at the subunit interface close to the decoding center. This chain is Small ribosomal subunit protein uS7, found in Methanothrix thermoacetophila (strain DSM 6194 / JCM 14653 / NBRC 101360 / PT) (Methanosaeta thermophila).